We begin with the raw amino-acid sequence, 326 residues long: Vitamin B12 import system permease protein BtuC (326 aa).

Residues 1–10 (MLTLARQQQR) are Cytoplasmic-facing. A helical transmembrane segment spans residues 11-35 (QNIRWLLCLSVLMLLALLLSLCAGE). Topologically, residues 36–56 (QWISPGDWFSPRGELFVWQIR) are periplasmic. Residues 57-81 (LPRTLAVLLVGAALAISGAVMQALF) traverse the membrane as a helical segment. At 82 to 92 (ENPLAEPGLLG) the chain is on the cytoplasmic side. The chain crosses the membrane as a helical span at residues 93–107 (VSNGAGVGLIAAVLL). Over 108 to 113 (GQGQLP) the chain is Periplasmic. A helical membrane pass occupies residues 114-138 (NWALGLCAIAGALIITLILLRFARR). Residues 139-141 (HLS) lie on the Cytoplasmic side of the membrane. A helical membrane pass occupies residues 142–166 (TSRLLLAGVALGIICSALMTWAIYF). Residues 167 to 190 (STSVDLRQLMYWMMGGFGGVDWRQ) are Periplasmic-facing. The helical transmembrane segment at 191–206 (SWLMLALIPMLLWICC) threads the bilayer. The Cytoplasmic segment spans residues 207–228 (QSRPMNMLALGEISARQLGLPL). A helical membrane pass occupies residues 229 to 249 (WFWRNVLVAATGWMVGVSVAL). Residues 250-257 (AGAIGFIG) are Periplasmic-facing. A helical membrane pass occupies residues 258–267 (LVIPHILRLC). Topologically, residues 268–274 (GLTDHRA) are cytoplasmic. The chain crosses the membrane as a helical span at residues 275 to 296 (LLPGCALAGASALLLADIVARL). Residues 297–304 (ALAAAELP) lie on the Periplasmic side of the membrane. The chain crosses the membrane as a helical span at residues 305-324 (IGVVTATLGAPVFIWLLLKA). Over 325 to 326 (GR) the chain is Cytoplasmic.

Belongs to the binding-protein-dependent transport system permease family. FecCD subfamily. In terms of assembly, the complex is composed of two ATP-binding proteins (BtuD), two transmembrane proteins (BtuC) and a solute-binding protein (BtuF).

It localises to the cell inner membrane. Part of the ABC transporter complex BtuCDF involved in vitamin B12 import. Involved in the translocation of the substrate across the membrane. This Escherichia coli O157:H7 protein is Vitamin B12 import system permease protein BtuC (btuC).